Here is a 424-residue protein sequence, read N- to C-terminus: MKLIKNGKVLQNGELQQADILIDGKVIKQIAPAIEPSNGIDIIDAKGHFVSPGFVDVHVHLREPGGEYKETIETGTKAAARGGFTTVCPMPNTRPVPDSVEHFEALQKLIDDNAQVRVLPYASITTRQLGKELVDFPALVKEGAFAFTDDGVGVQTASMMYEGMIEAAKVNKAIVAHCEDNSLIYGGAMHEGKRSKELGIPGIPNICESVQIARDVLLAEAAGCHYHVCHVSTKESVRVIRDAKRAGIHVTAEVTPHHLLLTEDDIPGNNAIYKMNPPLRSTEDREALLEGLLDGTIDCIATDHAPHARDEKAQPMEKAPFGIVGSETAFPLLYTHFVKNGDWTLQQLVDYLTIKPCETFNLEYGTLKENGYADLTIIDLDSEQEIKGEDFLSKADNTPFIGYKVYGNPILTMVEGEVKFEGDK.

2 residues coordinate Zn(2+): His58 and His60. Substrate is bound by residues 60-62 (HLR) and Asn92. Zn(2+) is bound by residues Asp150, His177, and His230. Asn276 serves as a coordination point for substrate. Zn(2+) is bound at residue Asp303. Asp303 is an active-site residue. Substrate contacts are provided by residues His307 and 321–322 (FG).

The protein belongs to the metallo-dependent hydrolases superfamily. DHOase family. Class I DHOase subfamily. Zn(2+) serves as cofactor.

The catalysed reaction is (S)-dihydroorotate + H2O = N-carbamoyl-L-aspartate + H(+). Its pathway is pyrimidine metabolism; UMP biosynthesis via de novo pathway; (S)-dihydroorotate from bicarbonate: step 3/3. In terms of biological role, catalyzes the reversible cyclization of carbamoyl aspartate to dihydroorotate. The protein is Dihydroorotase of Staphylococcus aureus (strain MRSA252).